The chain runs to 340 residues: MANPLISNHHGKNGKYTQAFLEQNGPGDARPTALDILKDNDRIDSMKDKVFLLTGSSGGIGIETGRALAATGGKVYLGVRDLEKGKQALEEILEPGRVELLELDIGSMESVRTAAKTFLSKSTQLNVLVNNAGIMACSEAKTADGFESQLAINYLGHFLLYKLLEQTLLSSSTPEFQSRVVNVSSAGHHMSSVVLDNINLEGEYEEWKAYGNAKTACIWMTNEIEHRYGSKGLHGLSLMPGGIATGLQRHVDPETLKQWGSSEPAQKYGKSSAQGAATTITAAFGKEWEGKGGVYLEDCQEAGPVPEGGTLAVGVAPHAFDPEGEKKLWDLSLKMLDLSE.

NADP(+) contacts are provided by Ile-60, Lys-84, Asp-104, Asn-131, and Lys-162. The active-site Proton donor is the Ser-184. Residues Tyr-210 and Lys-214 each contribute to the NADP(+) site. Residue Tyr-210 is the Proton acceptor of the active site. The Lowers pKa of active site Tyr role is filled by Lys-214.

Belongs to the short-chain dehydrogenases/reductases (SDR) family.

The protein operates within sesquiterpene biosynthesis. Its function is as follows. Short-chain dehydrogenase/reductase; part of the gene cluster that mediates the biosynthesis of PR-toxin, a bicyclic sesquiterpene belonging to the eremophilane class and acting as a mycotoxin. The first step of the pathway is catalyzed by the aristolochene synthase which performs the cyclization of trans,trans-farnesyl diphosphate (FPP) to the bicyclic sesquiterpene aristolochene. Following the formation of aristolochene, the non-oxygenated aristolochene is converted to the trioxygenated intermediate eremofortin B, via 7-epi-neopetasone. This conversion appears to involve three enzymes, a hydroxysterol oxidase-like enzyme, the quinone-oxidase prx3 that forms the quinone-type-structure in the bicyclic nucleus of aristolochene with the C8-oxo group and the C-3 hydroxyl group, and the P450 monooxygenase prx9 that introduces the epoxide at the double bond between carbons 1 and 2. No monoxy or dioxy-intermediates have been reported to be released to the broth, so these three early oxidative reactions may be coupled together. Eremofortin B is further oxidized by another P450 monooxygenase, that introduces a second epoxide between carbons 7 and 11 prior to acetylation to eremofortin A by the acetyltransferase prx11. The second epoxidation may be performed by a second P450 monooxygenase. After the acetylation step, eremofortin A is converted to eremofortin C and then to PR-toxin. First the conversion of eremofortin A to eremofortin C proceeds by oxidation of the side chain of the molecule at C-12 and is catalyzed by the short-chain oxidoreductase prx1. The cytochrome P450 monooxygenase prx8 also plays a role in this step. The primary alcohol formed at C-12 is finally oxidized by the short-chain alcohol dehydrogenase prx4 that forms PR-toxin. This chain is Short-chain dehydrogenase/reductase prx1, found in Penicillium rubens (strain ATCC 28089 / DSM 1075 / NRRL 1951 / Wisconsin 54-1255) (Penicillium chrysogenum).